Here is a 537-residue protein sequence, read N- to C-terminus: Tyrosine-protein kinase Fyn (537 aa).

Residue glycine 2 is the site of N-myristoyl glycine attachment. Residues cysteine 3 and cysteine 6 are each lipidated (S-palmitoyl cysteine). Threonine 12 is subject to Phosphothreonine; by PKC. The interval 14-35 is disordered; sequence LTEERDGSLNQSSGYRYGTDPT. Phosphoserine occurs at positions 21 and 26. Positions 82 to 143 constitute an SH3 domain; the sequence is TGVTLFVALY…PSNYVAPVDS (62 aa). The 98-residue stretch at 149-246 folds into the SH2 domain; it reads WYFGKLGRKD…GLCCRLVVPC (98 aa). Tyrosine 185 bears the Phosphotyrosine mark. The Protein kinase domain occupies 271-524; that stretch reads LQLIKRLGNG…YLQGFLEDYF (254 aa). ATP is bound by residues 277 to 285 and lysine 299; that span reads LGNGQFGEV. Aspartate 390 serves as the catalytic Proton acceptor. Tyrosine 420 bears the Phosphotyrosine; by autocatalysis mark. At tyrosine 531 the chain carries Phosphotyrosine; by CSK.

The protein belongs to the protein kinase superfamily. Tyr protein kinase family. SRC subfamily. Interacts (via its SH3 domain) with PIK3R1 and PRMT8. Interacts with FYB1, PAG1, and SH2D1A. Interacts with CD79A (tyrosine-phosphorylated form); the interaction increases FYN activity. Interacts (via SH2 domain) with CSF1R (tyrosine phosphorylated). Interacts with TOM1L1 (phosphorylated form). Interacts with KDR (tyrosine phosphorylated). Interacts (via SH3 domain) with KLHL2 (via N-terminus). Interacts with SH2D1A and SLAMF1. Interacts with ITCH; the interaction phosphorylates ITCH and negatively regulates its activity. Interacts with FASLG. Interacts with RUNX3. Interacts with KIT. Interacts with EPHA8; possible downstream effector of EPHA8 in regulation of cell adhesion. Interacts with PTK2/FAK1; this interaction leads to PTK2/FAK1 phosphorylation and activation. Interacts with CAV1; this interaction couples integrins to the Ras-ERK pathway. Interacts with UNC119. Interacts (via SH2 domain) with PTPRH (phosphorylated form). Interacts with PTPRO (phosphorylated form). Interacts with PTPRB (phosphorylated form). Interacts with FYB2. Interacts with DSCAM. Interacts with SKAP1 and FYB1; this interaction promotes the phosphorylation of CLNK. Interacts with NEDD9; in the presence of PTK2. Mn(2+) is required as a cofactor. Autophosphorylated at Tyr-420. Phosphorylation on the C-terminal tail at Tyr-531 by CSK maintains the enzyme in an inactive state. PTPRC/CD45 dephosphorylates Tyr-531 leading to activation. Ultraviolet B (UVB) strongly increase phosphorylation at Thr-12 and kinase activity, and promotes translocation from the cytoplasm to the nucleus. Dephosphorylation at Tyr-420 by PTPN2 negatively regulates T-cell receptor signaling. Phosphorylated at tyrosine residues, which can be enhanced by NTN1. Post-translationally, palmitoylated. Palmitoylation at Cys-3 and Cys-6, probably by ZDHHC21, regulates subcellular location.

The protein localises to the cytoplasm. It is found in the nucleus. The protein resides in the cell membrane. It localises to the perikaryon. The catalysed reaction is L-tyrosyl-[protein] + ATP = O-phospho-L-tyrosyl-[protein] + ADP + H(+). Inhibited by phosphorylation of Tyr-531 by leukocyte common antigen and activated by dephosphorylation of this site. Functionally, non-receptor tyrosine-protein kinase that plays a role in many biological processes including regulation of cell growth and survival, cell adhesion, integrin-mediated signaling, cytoskeletal remodeling, cell motility, immune response and axon guidance. Inactive FYN is phosphorylated on its C-terminal tail within the catalytic domain. Following activation by PKA, the protein subsequently associates with PTK2/FAK1, allowing PTK2/FAK1 phosphorylation, activation and targeting to focal adhesions. Involved in the regulation of cell adhesion and motility through phosphorylation of CTNNB1 (beta-catenin) and CTNND1 (delta-catenin). Regulates cytoskeletal remodeling by phosphorylating several proteins including the actin regulator WAS and the microtubule-associated proteins MAP2 and MAPT. Promotes cell survival by phosphorylating AGAP2/PIKE-A and preventing its apoptotic cleavage. Participates in signal transduction pathways that regulate the integrity of the glomerular slit diaphragm (an essential part of the glomerular filter of the kidney) by phosphorylating several slit diaphragm components including NPHS1, KIRREL1 and TRPC6. Plays a role in neural processes by phosphorylating DPYSL2, a multifunctional adapter protein within the central nervous system, ARHGAP32, a regulator for Rho family GTPases implicated in various neural functions, and SNCA, a small pre-synaptic protein. Involved in reelin signaling by mediating phosphorylation of DAB1 following reelin (RELN)-binding to its receptor. Participates in the downstream signaling pathways that lead to T-cell differentiation and proliferation following T-cell receptor (TCR) stimulation. Phosphorylates PTK2B/PYK2 in response to T-cell receptor activation. Also participates in negative feedback regulation of TCR signaling through phosphorylation of PAG1, thereby promoting interaction between PAG1 and CSK and recruitment of CSK to lipid rafts. CSK maintains LCK and FYN in an inactive form. Promotes CD28-induced phosphorylation of VAV1. In mast cells, phosphorylates CLNK after activation of immunoglobulin epsilon receptor signaling. Can also promote CD244-mediated NK cell activation. In Bos taurus (Bovine), this protein is Tyrosine-protein kinase Fyn.